The chain runs to 308 residues: MEHITVLLQEAVDGLAIRPDGIYVDGTFGRGGHSRLILQQLGPQGRLYAIDRDPQAVAVAKEWQDPRFEIISGPFSSLHEYMAERGLLGKVDGLLLDLGVSSPQLDEAERGFSFMNDGPLDMRMDPLHGESAAEWLLHADVDDIAWVLRTYGEERFANRIARAIVADRVTTPYTRTRQLAEMIARVVPNKEKHKHPATRSFQALRIHVNQELKEIEETLKASLSVLAPGGRLAVISFHSLEDRIVKQFIRQQEKGIQPPRGLPITEDQIRKTQTLHSVGKAIKPADSEVSDNVRSRSSVLRVAERLGG.

S-adenosyl-L-methionine-binding positions include Gly-31 to His-33, Asp-51, Phe-75, Asp-97, and Gln-104.

It belongs to the methyltransferase superfamily. RsmH family.

The protein localises to the cytoplasm. The enzyme catalyses cytidine(1402) in 16S rRNA + S-adenosyl-L-methionine = N(4)-methylcytidine(1402) in 16S rRNA + S-adenosyl-L-homocysteine + H(+). In terms of biological role, specifically methylates the N4 position of cytidine in position 1402 (C1402) of 16S rRNA. The polypeptide is Ribosomal RNA small subunit methyltransferase H (Tolumonas auensis (strain DSM 9187 / NBRC 110442 / TA 4)).